Reading from the N-terminus, the 1473-residue chain is Sulfite reductase [NADPH] subunit beta (1473 aa).

A Flavodoxin-like domain is found at 728 to 876; sequence LTILFASDGG…AYNLWEPELW (149 aa). Cys-1328, Cys-1334, Cys-1373, and Cys-1377 together coordinate [4Fe-4S] cluster. Position 1377 (Cys-1377) interacts with siroheme.

It belongs to the nitrite and sulfite reductase 4Fe-4S domain family. In terms of assembly, alpha(2)-beta(2). The alpha component is a flavoprotein, the beta component is a hemoprotein. The cofactor is siroheme. [4Fe-4S] cluster serves as cofactor.

The protein resides in the cytoplasm. It carries out the reaction hydrogen sulfide + 3 NADP(+) + 3 H2O = sulfite + 3 NADPH + 4 H(+). The protein operates within sulfur metabolism; hydrogen sulfide biosynthesis; hydrogen sulfide from sulfite (NADPH route): step 1/1. Functionally, catalyzes the reduction of sulfite to sulfide, one of several activities required for the biosynthesis of L-cysteine from sulfate. This Schizosaccharomyces pombe (strain 972 / ATCC 24843) (Fission yeast) protein is Sulfite reductase [NADPH] subunit beta (sir1).